The primary structure comprises 374 residues: DNA-directed RNA polymerase subunit alpha (374 aa).

Residues 1-270 are alpha N-terminal domain (alpha-NTD); sequence MIFDEDSSSV…DQFQQFINFD (270 aa). The segment at 282–374 is alpha C-terminal domain (alpha-CTD); the sequence is KDVLPYDSNL…ESLSKQYSEE (93 aa).

It belongs to the RNA polymerase alpha chain family. Homodimer. The RNAP catalytic core consists of 2 alpha, 1 beta, 1 beta' and 1 omega subunit. When a sigma factor is associated with the core the holoenzyme is formed, which can initiate transcription.

The catalysed reaction is RNA(n) + a ribonucleoside 5'-triphosphate = RNA(n+1) + diphosphate. In terms of biological role, DNA-dependent RNA polymerase catalyzes the transcription of DNA into RNA using the four ribonucleoside triphosphates as substrates. This is DNA-directed RNA polymerase subunit alpha from Ehrlichia ruminantium (strain Welgevonden).